The primary structure comprises 193 residues: dCTP deaminase (193 aa).

DCTP-binding positions include 110–115 (RSSLAR), D128, 136–138 (VLE), Y171, K178, and Q182. E138 functions as the Proton donor/acceptor in the catalytic mechanism. Positions 169–193 (RPYNSRQDAKYKGQQGAVASRIDKD) are disordered.

This sequence belongs to the dCTP deaminase family. Homotrimer.

It catalyses the reaction dCTP + H2O + H(+) = dUTP + NH4(+). The protein operates within pyrimidine metabolism; dUMP biosynthesis; dUMP from dCTP (dUTP route): step 1/2. In terms of biological role, catalyzes the deamination of dCTP to dUTP. The protein is dCTP deaminase of Erwinia tasmaniensis (strain DSM 17950 / CFBP 7177 / CIP 109463 / NCPPB 4357 / Et1/99).